A 243-amino-acid polypeptide reads, in one-letter code: 2-C-methyl-D-erythritol 4-phosphate cytidylyltransferase (243 aa).

It belongs to the IspD/TarI cytidylyltransferase family. IspD subfamily.

It catalyses the reaction 2-C-methyl-D-erythritol 4-phosphate + CTP + H(+) = 4-CDP-2-C-methyl-D-erythritol + diphosphate. The protein operates within isoprenoid biosynthesis; isopentenyl diphosphate biosynthesis via DXP pathway; isopentenyl diphosphate from 1-deoxy-D-xylulose 5-phosphate: step 2/6. Functionally, catalyzes the formation of 4-diphosphocytidyl-2-C-methyl-D-erythritol from CTP and 2-C-methyl-D-erythritol 4-phosphate (MEP). This is 2-C-methyl-D-erythritol 4-phosphate cytidylyltransferase from Pelodictyon phaeoclathratiforme (strain DSM 5477 / BU-1).